Here is a 431-residue protein sequence, read N- to C-terminus: Trigger factor (431 aa).

Positions 161-246 (DDRVTIDFVG…LKKVENIVLP (86 aa)) constitute a PPIase FKBP-type domain.

It belongs to the FKBP-type PPIase family. Tig subfamily.

It is found in the cytoplasm. It catalyses the reaction [protein]-peptidylproline (omega=180) = [protein]-peptidylproline (omega=0). Functionally, involved in protein export. Acts as a chaperone by maintaining the newly synthesized protein in an open conformation. Functions as a peptidyl-prolyl cis-trans isomerase. The polypeptide is Trigger factor (Glaesserella parasuis serovar 5 (strain SH0165) (Haemophilus parasuis)).